Consider the following 165-residue polypeptide: Phosphopantetheine adenylyltransferase (165 aa).

S9 provides a ligand contact to substrate. ATP-binding positions include 9–10 (SF) and H17. Substrate is bound by residues K41, I75, and R89. ATP-binding positions include 90–92 (GVR), E100, and 125–131 (YLFVRSD).

Belongs to the bacterial CoaD family. In terms of assembly, homohexamer. It depends on Mg(2+) as a cofactor.

The protein resides in the cytoplasm. The catalysed reaction is (R)-4'-phosphopantetheine + ATP + H(+) = 3'-dephospho-CoA + diphosphate. It participates in cofactor biosynthesis; coenzyme A biosynthesis; CoA from (R)-pantothenate: step 4/5. Reversibly transfers an adenylyl group from ATP to 4'-phosphopantetheine, yielding dephospho-CoA (dPCoA) and pyrophosphate. The sequence is that of Phosphopantetheine adenylyltransferase from Borrelia duttonii (strain Ly).